The chain runs to 439 residues: Aspartate--tRNA(Asp/Asn) ligase (439 aa).

E177 lines the L-aspartate pocket. The tract at residues 199–202 is aspartate; the sequence is QLYK. An L-aspartate-binding site is contributed by R221. ATP contacts are provided by residues 221–223, 229–231, and E362; these read RAE and RHL. Residues E362 and S365 each contribute to the Mg(2+) site. The L-aspartate site is built by S365 and R369. 410–413 contributes to the ATP binding site; sequence GADR.

Belongs to the class-II aminoacyl-tRNA synthetase family. Type 2 subfamily. As to quaternary structure, homodimer. The cofactor is Mg(2+).

Its subcellular location is the cytoplasm. It carries out the reaction tRNA(Asx) + L-aspartate + ATP = L-aspartyl-tRNA(Asx) + AMP + diphosphate. Its function is as follows. Aspartyl-tRNA synthetase with relaxed tRNA specificity since it is able to aspartylate not only its cognate tRNA(Asp) but also tRNA(Asn). Reaction proceeds in two steps: L-aspartate is first activated by ATP to form Asp-AMP and then transferred to the acceptor end of tRNA(Asp/Asn). The polypeptide is Aspartate--tRNA(Asp/Asn) ligase (Methanosphaera stadtmanae (strain ATCC 43021 / DSM 3091 / JCM 11832 / MCB-3)).